We begin with the raw amino-acid sequence, 548 residues long: ATP synthase subunit alpha (548 aa).

Gly172–Thr179 contributes to the ATP binding site.

This sequence belongs to the ATPase alpha/beta chains family. In terms of assembly, F-type ATPases have 2 components, CF(1) - the catalytic core - and CF(0) - the membrane proton channel. CF(1) has five subunits: alpha(3), beta(3), gamma(1), delta(1), epsilon(1). CF(0) has three main subunits: a(1), b(2) and c(9-12). The alpha and beta chains form an alternating ring which encloses part of the gamma chain. CF(1) is attached to CF(0) by a central stalk formed by the gamma and epsilon chains, while a peripheral stalk is formed by the delta and b chains.

The protein resides in the cell membrane. It carries out the reaction ATP + H2O + 4 H(+)(in) = ADP + phosphate + 5 H(+)(out). In terms of biological role, produces ATP from ADP in the presence of a proton gradient across the membrane. The alpha chain is a regulatory subunit. The protein is ATP synthase subunit alpha of Mycolicibacterium smegmatis (strain ATCC 700084 / mc(2)155) (Mycobacterium smegmatis).